Consider the following 117-residue polypeptide: MHEYSIVSALIEQCEQHALANHAAKITRVDIKLGVMSGVEPSLLQTAFDTFKLDSICKAAQLNIQIQPLVILCQDCQSESVLSERTVVCPTCQSYRTRVLDGEDMLLMQLEMEQDED.

Histidine 2 serves as a coordination point for Ni(2+). 4 residues coordinate Zn(2+): cysteine 73, cysteine 76, cysteine 89, and cysteine 92.

This sequence belongs to the HypA/HybF family.

In terms of biological role, involved in the maturation of [NiFe] hydrogenases. Required for nickel insertion into the metal center of the hydrogenase. This is Hydrogenase maturation factor HypA from Shewanella baltica (strain OS185).